A 56-amino-acid chain; its full sequence is Genome polyprotein (56 aa).

Residues 1 to 30 (ETMLDRIASGDLESSVDDPRSAEDKRFESH) are disordered. Positions 17 to 30 (DDPRSAEDKRFESH) are enriched in basic and acidic residues.

The protein belongs to the picornaviridae polyprotein family. In terms of assembly, homopentamer. Homooligomer. Interacts with capsid protein VP2. Interacts with capsid protein VP3. In terms of processing, specific enzymatic cleavages by viral protease in vivo yield a variety of precursors and mature proteins. Polyprotein processing intermediates are produced, such as P1-2A which is a functional precursor of the structural proteins, VP0 which is a VP4-VP2 precursor, VP1-2A precursor, 3ABC precursor which is a stable and catalytically active precursor of 3A, 3B and 3C proteins, 3AB and 3CD precursors. The assembly signal 2A is removed from VP1-2A by a host protease, possibly host Cathepsin L. This cleavage occurs over a region of 3 amino-acids probably generating VP1 proteins with heterogeneous C-termini. Post-translationally, the assembly signal 2A is removed from VP1-2A by a host protease, possibly host Cathepsin L in naked virions. This cleavage does not occur in enveloped virions. This cleavage occurs over a region of 3 amino-acids probably generating VP1 proteins with heterogeneous C-termini.

The protein resides in the virion. Its subcellular location is the host endosome. The protein localises to the host multivesicular body. Capsid proteins VP1, VP2, and VP3 form a closed capsid enclosing the viral positive strand RNA genome. All these proteins contain a beta-sheet structure called beta-barrel jelly roll. Together they form an icosahedral capsid (T=3) composed of 60 copies of each VP1, VP2, and VP3, with a diameter of approximately 300 Angstroms. VP1 is situated at the 12 fivefold axes, whereas VP2 and VP3 are located at the quasi-sixfold axes. The naked capsid interacts with the host receptor HAVCR1 to provide virion attachment to and probably entry into the target cell. Its function is as follows. Precursor component of immature procapsids that corresponds to an extended form of the structural protein VP1. After maturation, possibly by the host Cathepsin L, the assembly signal 2A is cleaved to give rise to the mature VP1 protein. The protein is Genome polyprotein of Callithrix (Owl-faced monkey).